A 425-amino-acid polypeptide reads, in one-letter code: Tyrosine--tRNA ligase (425 aa).

Residue Tyr-37 coordinates L-tyrosine. A 'HIGH' region motif is present at residues 42–51; the sequence is PTADSLHLGH. Tyr-175 and Gln-179 together coordinate L-tyrosine. Positions 235 to 239 match the 'KMSKS' region motif; sequence KFGKT. Lys-238 is a binding site for ATP. The S4 RNA-binding domain maps to 357-415; it reads QDLQQALVNAELAPSRGQARKLIEAKSVSINGSLQTDAEYTFGEDDRLFGQYTLLRRGK.

The protein belongs to the class-I aminoacyl-tRNA synthetase family. TyrS type 1 subfamily. As to quaternary structure, homodimer.

The protein resides in the cytoplasm. The catalysed reaction is tRNA(Tyr) + L-tyrosine + ATP = L-tyrosyl-tRNA(Tyr) + AMP + diphosphate + H(+). In terms of biological role, catalyzes the attachment of tyrosine to tRNA(Tyr) in a two-step reaction: tyrosine is first activated by ATP to form Tyr-AMP and then transferred to the acceptor end of tRNA(Tyr). The chain is Tyrosine--tRNA ligase from Erwinia tasmaniensis (strain DSM 17950 / CFBP 7177 / CIP 109463 / NCPPB 4357 / Et1/99).